We begin with the raw amino-acid sequence, 88 residues long: EMBRYO SURROUNDING FACTOR 1-like protein 11 (88 aa).

The first 23 residues, 1–23 (MISSSHFAIFCIILVSLFALQQY), serve as a signal peptide directing secretion. Cystine bridges form between C44-C59, C49-C78, C57-C74, and C60-C67.

This sequence belongs to the MEG family. As to expression, expressed in stems.

This is EMBRYO SURROUNDING FACTOR 1-like protein 11 (ESFL11) from Arabidopsis thaliana (Mouse-ear cress).